Here is a 128-residue protein sequence, read N- to C-terminus: Small ribosomal subunit protein uS11 (128 aa).

This sequence belongs to the universal ribosomal protein uS11 family. As to quaternary structure, part of the 30S ribosomal subunit. Interacts with proteins S7 and S18. Binds to IF-3.

Functionally, located on the platform of the 30S subunit, it bridges several disparate RNA helices of the 16S rRNA. Forms part of the Shine-Dalgarno cleft in the 70S ribosome. The polypeptide is Small ribosomal subunit protein uS11 (Onion yellows phytoplasma (strain OY-M)).